We begin with the raw amino-acid sequence, 164 residues long: FMN reductase (NADH) RutF (164 aa).

It belongs to the non-flavoprotein flavin reductase family. RutF subfamily.

It carries out the reaction FMNH2 + NAD(+) = FMN + NADH + 2 H(+). Catalyzes the reduction of FMN to FMNH2 which is used to reduce pyrimidine by RutA via the Rut pathway. The polypeptide is FMN reductase (NADH) RutF (Escherichia coli (strain K12 / MC4100 / BW2952)).